A 50-amino-acid polypeptide reads, in one-letter code: Disintegrin pyramidin-A (50 aa).

The Disintegrin domain occupies 1 to 47 (DCASGPCCRDCKFLKEGTICKRARGDNMDDYCNGKTCDCPRNPHKGE). Disulfide bonds link C2–C11, C7–C32, C8–C37, and C20–C39. A Cell attachment site motif is present at residues 24 to 26 (RGD).

It belongs to the venom metalloproteinase (M12B) family. P-II subfamily. P-IIa sub-subfamily. Monomer (disintegrin). Expressed by the venom gland.

It is found in the secreted. Functionally, inhibits ADP-induced human platelet aggregation. This Echis pyramidum leakeyi (Leakey's carpet viper) protein is Disintegrin pyramidin-A.